A 197-amino-acid chain; its full sequence is MTHALDTLALNQLFTEARTHNAWRDEPVAPELLRQLHELAKWGPTAMNCCPLRVRFIVGAEARARLLPLMSEGNRAKTAAAPVIAILGRDVDFHQHMPTLAPHMAGARERFADQPAQREAMSQLNGALEAGYFILAARALGLDCGPMGGFDAAAVDAEFWAGTAVRSMIVCNLGHGDPAGLRPRAPRLDFDTACAVL.

This sequence belongs to the nitroreductase family. HadB/RutE subfamily. FMN serves as cofactor.

This is Putative NADH dehydrogenase/NAD(P)H nitroreductase Lcho_1290 from Leptothrix cholodnii (strain ATCC 51168 / LMG 8142 / SP-6) (Leptothrix discophora (strain SP-6)).